Reading from the N-terminus, the 58-residue chain is Arabinogalactan protein 21 (58 aa).

The N-terminal stretch at 1 to 24 (MEAMKMKMMVFIMVVAVAFSAATA) is a signal peptide. A 4-hydroxyproline mark is found at P30, P32, and P34. O-linked (Ara...) hydroxyproline glycans are attached at residues P30, P32, and P34. Residue S36 is the site of GPI-anchor amidated serine attachment. Positions 37 to 58 (DAAMFVPALFASVVALASGFIF) are cleaved as a propeptide — removed in mature form.

Belongs to the AG-peptide AGP family. Contains 4-hydroxyproline; hydroxylated on Pro-30, Pro-32 and Pro-34. Post-translationally, O-glycosylated on hydroxyprolines; noncontiguous hydroxylproline residues are glycosylated with arabinogalactan.

The protein resides in the cell membrane. Its function is as follows. Proteoglycan that seems to be implicated in diverse developmental roles such as differentiation, cell-cell recognition, embryogenesis and programmed cell death. The polypeptide is Arabinogalactan protein 21 (Arabidopsis thaliana (Mouse-ear cress)).